A 235-amino-acid polypeptide reads, in one-letter code: Clathrin light chain A (235 aa).

Residues 1-32 (MAELDPFGAPAGAPGGPALGNGVAGAGEEDPA) form a disordered region. Gly residues predominate over residues 13-25 (APGGPALGNGVAG). The tract at residues 99–161 (VDRLQSEPES…QLQKTKANNR (63 aa)) is involved in binding clathrin heavy chain. A phosphoserine mark is found at S104 and S193. K210 carries the post-translational modification N6-acetyllysine. S223 carries the phosphoserine modification. Residue K229 is modified to N6-acetyllysine.

This sequence belongs to the clathrin light chain family. In terms of assembly, clathrin coats are formed from molecules containing 3 heavy chains and 3 light chains. Interacts with CALY; the interaction stimulates clathrin self-assembly and clathrin-mediated endocytosis. Interacts with CKAP5 and TACC3 forming the TACC3/ch-TOG/clathrin complex located at spindle inter-microtubules bridges; the complex implicates clathrin triskelions.

The protein resides in the cytoplasmic vesicle membrane. It localises to the membrane. Its subcellular location is the coated pit. It is found in the cytoplasm. The protein localises to the cytoskeleton. The protein resides in the spindle. Its function is as follows. Clathrin is the major protein of the polyhedral coat of coated pits and vesicles. Acts as a component of the TACC3/ch-TOG/clathrin complex proposed to contribute to stabilization of kinetochore fibers of the mitotic spindle by acting as inter-microtubule bridge. The protein is Clathrin light chain A (Clta) of Mus musculus (Mouse).